A 120-amino-acid chain; its full sequence is uncharacterized protein (120 aa).

It localises to the cytoplasm. It is found in the nucleus. This is an uncharacterized protein from Schizosaccharomyces pombe (strain 972 / ATCC 24843) (Fission yeast).